The chain runs to 112 residues: Cell cycle protein GpsB (112 aa).

The stretch at 42–77 (YQKMADMNNEVVKLSEENHKLKKELEELRLRVATSR) forms a coiled coil. Positions 74–96 (ATSRPQDNKNFSSNNSSSASNNV) are disordered. Residues 81-95 (NKNFSSNNSSSASNN) show a composition bias toward low complexity.

It belongs to the GpsB family. Forms polymers through the coiled coil domains. Interacts with PBP1, MreC and EzrA.

The protein resides in the cytoplasm. Its function is as follows. Divisome component that associates with the complex late in its assembly, after the Z-ring is formed, and is dependent on DivIC and PBP2B for its recruitment to the divisome. Together with EzrA, is a key component of the system that regulates PBP1 localization during cell cycle progression. Its main role could be the removal of PBP1 from the cell pole after pole maturation is completed. Also contributes to the recruitment of PBP1 to the division complex. Not essential for septum formation. The chain is Cell cycle protein GpsB from Staphylococcus epidermidis (strain ATCC 12228 / FDA PCI 1200).